A 20-amino-acid chain; its full sequence is Unknown protein NF045 from 2D-PAGE (20 aa).

The polypeptide is Unknown protein NF045 from 2D-PAGE (Naegleria fowleri (Brain eating amoeba)).